A 478-amino-acid chain; its full sequence is F-box protein YDR306C (478 aa).

The span at 1-14 shows a compositional bias: basic residues; it reads MANKSRPKKIKAPY. Disordered stretches follow at residues 1–32 and 67–101; these read MANK…DNKA and RLSN…VIES. Residues 80-90 show a composition bias toward low complexity; the sequence is QSPSSSSTSSS. Residues 91–101 show a composition bias toward basic and acidic residues; sequence KGEKNGKVIES. The 62-residue stretch at 112–173 folds into the F-box domain; it reads KMVLPWEIQH…CLPKLYYAPA (62 aa).

As to quaternary structure, interacts with SKP1. Component of the probable SCF(YDR306C) complex containing CDC53, SKP1, RBX1 and YDR306C. In terms of processing, autoubiquitinated by the E3 ubiquitin ligase complex in conjunction with the E2 enzyme CDC34.

It functions in the pathway protein modification; protein ubiquitination. In terms of biological role, substrate recognition component of a SCF (SKP1-CUL1-F-box protein) E3 ubiquitin-protein ligase complex which mediates the ubiquitination and subsequent proteasomal degradation of target proteins. Probably recognizes and binds to phosphorylated target proteins. The protein is F-box protein YDR306C of Saccharomyces cerevisiae (strain ATCC 204508 / S288c) (Baker's yeast).